The chain runs to 344 residues: tRNA N6-adenosine threonylcarbamoyltransferase (344 aa).

Fe cation contacts are provided by H113 and H117. Substrate is bound by residues 135–139, D169, G182, D186, and N278; that span reads LVSGG. D306 serves as a coordination point for Fe cation. The segment at 325-344 is disordered; sequence ESPISVGTDPSLSVETPQVF. A compositionally biased stretch (polar residues) spans 326-344; sequence SPISVGTDPSLSVETPQVF.

This sequence belongs to the KAE1 / TsaD family. Fe(2+) is required as a cofactor.

Its subcellular location is the cytoplasm. The enzyme catalyses L-threonylcarbamoyladenylate + adenosine(37) in tRNA = N(6)-L-threonylcarbamoyladenosine(37) in tRNA + AMP + H(+). Its function is as follows. Required for the formation of a threonylcarbamoyl group on adenosine at position 37 (t(6)A37) in tRNAs that read codons beginning with adenine. Is involved in the transfer of the threonylcarbamoyl moiety of threonylcarbamoyl-AMP (TC-AMP) to the N6 group of A37, together with TsaE and TsaB. TsaD likely plays a direct catalytic role in this reaction. In Corynebacterium glutamicum (strain R), this protein is tRNA N6-adenosine threonylcarbamoyltransferase.